Here is a 296-residue protein sequence, read N- to C-terminus: Small ribosomal subunit biogenesis GTPase RsgA (296 aa).

Residues 65–226 form the CP-type G domain; the sequence is TNELIRPPIS…VADTPGFSSL (162 aa). Residues 114–117 and 169–177 contribute to the GTP site; these read TKMD and GQSGVGKSS. Residues Cys250, Cys255, His257, and Cys263 each coordinate Zn(2+).

Belongs to the TRAFAC class YlqF/YawG GTPase family. RsgA subfamily. As to quaternary structure, monomer. Associates with 30S ribosomal subunit, binds 16S rRNA. Zn(2+) is required as a cofactor.

The protein resides in the cytoplasm. In terms of biological role, one of several proteins that assist in the late maturation steps of the functional core of the 30S ribosomal subunit. Helps release RbfA from mature subunits. May play a role in the assembly of ribosomal proteins into the subunit. Circularly permuted GTPase that catalyzes slow GTP hydrolysis, GTPase activity is stimulated by the 30S ribosomal subunit. This Bacillus velezensis (strain DSM 23117 / BGSC 10A6 / LMG 26770 / FZB42) (Bacillus amyloliquefaciens subsp. plantarum) protein is Small ribosomal subunit biogenesis GTPase RsgA.